The chain runs to 373 residues: Flagellar P-ring protein (373 aa).

Residues 1 to 27 (MPSFSPTLLKLAAAALSALLLSGVAAS) form the signal peptide.

This sequence belongs to the FlgI family. As to quaternary structure, the basal body constitutes a major portion of the flagellar organelle and consists of four rings (L,P,S, and M) mounted on a central rod.

Its subcellular location is the periplasm. The protein localises to the bacterial flagellum basal body. In terms of biological role, assembles around the rod to form the L-ring and probably protects the motor/basal body from shearing forces during rotation. In Rhodopseudomonas palustris (strain BisB5), this protein is Flagellar P-ring protein.